Consider the following 460-residue polypeptide: Diguanylate cyclase DosC (460 aa).

His98 is a binding site for heme. The region spanning Thr325 to Ala458 is the GGDEF domain. Asp333 serves as a coordination point for Mg(2+). Substrate contacts are provided by Asn341 and Asp350. Asp376 is a binding site for Mg(2+). Catalysis depends on Asp376, which acts as the Proton acceptor.

Requires heme as cofactor. Mg(2+) serves as cofactor.

The enzyme catalyses 2 GTP = 3',3'-c-di-GMP + 2 diphosphate. It participates in purine metabolism; 3',5'-cyclic di-GMP biosynthesis. Functionally, globin-coupled heme-based oxygen sensor protein displaying diguanylate cyclase (DGC) activity in response to oxygen availability. Thus, catalyzes the synthesis of cyclic diguanylate (c-di-GMP) via the condensation of 2 GTP molecules. Cyclic-di-GMP is a second messenger which controls cell surface-associated traits in bacteria. The protein is Diguanylate cyclase DosC (dosC) of Shigella sonnei (strain Ss046).